A 454-amino-acid polypeptide reads, in one-letter code: Aquaglyceroporin-9 (454 aa).

Over 1-186 (MEGGLRSPLN…RHTMREPFSE (186 aa)) the chain is Cytoplasmic. Residues 187–207 (FFGVFILILFGDGVVAQVVLS) form a helical membrane-spanning segment. The Extracellular segment spans residues 208–216 (SGERGSYQS). Residues 217 to 237 (ISWGWGIGVMLGVYASGVSGA) traverse the membrane as a helical segment. At 238-257 (HINPAVTFANCIFRKFPWRK) the chain is on the cytoplasmic side. Positions 240–242 (NPA) match the NPA 1 motif. A helical membrane pass occupies residues 258-278 (FPIYMLAQVLGAMCASGVVYA). Topologically, residues 279 to 316 (NYKSAIDMFEGGNNIRTVGLNTSSAGIFCTYPAPFMTK) are extracellular. N-linked (GlcNAc...) asparagine glycosylation occurs at Asn299. Residues 317–337 (TGQFFSEFVASTILMFCIYAL) traverse the membrane as a helical segment. Over 338-351 (QDNGNLGSGNLTPL) the chain is Cytoplasmic. A helical transmembrane segment spans residues 352–372 (GLFFVIFGIGACFGWETGYAI). Residues 373-375 (NLA) carry the NPA 2 motif. The Extracellular portion of the chain corresponds to 373–403 (NLARDFGPRLMSYFLGYGHEVWSAGNYYFWV). Residues 404-424 (PMVAPFIGCLFGGWLYDVFIF) form a helical membrane-spanning segment. The Cytoplasmic portion of the chain corresponds to 425-454 (TGESPINTPWMGLKRLMPGGLGSKKVDSKV).

It belongs to the MIP/aquaporin (TC 1.A.8) family.

The protein localises to the membrane. The enzyme catalyses H2O(in) = H2O(out). The catalysed reaction is glycerol(in) = glycerol(out). In terms of biological role, water channel required to facilitate the transport of water across membranes. May play a role in the vegetative growth and pathogenicity. In Botryotinia fuckeliana (strain B05.10) (Noble rot fungus), this protein is Aquaglyceroporin-9.